We begin with the raw amino-acid sequence, 143 residues long: Transcriptional regulator MraZ (143 aa).

SpoVT-AbrB domains are found at residues 5–47 and 76–119; these read EYHH…PIEE and AMES…SAER.

This sequence belongs to the MraZ family. In terms of assembly, forms oligomers.

Its subcellular location is the cytoplasm. The protein localises to the nucleoid. This is Transcriptional regulator MraZ from Lactobacillus gasseri (strain ATCC 33323 / DSM 20243 / BCRC 14619 / CIP 102991 / JCM 1131 / KCTC 3163 / NCIMB 11718 / NCTC 13722 / AM63).